Consider the following 138-residue polypeptide: Large ribosomal subunit protein uL16 (138 aa).

The span at 1–13 (MLQPKRRKYRKEQ) shows a compositional bias: basic residues. Residues 1-20 (MLQPKRRKYRKEQKGRNTGI) form a disordered region.

The protein belongs to the universal ribosomal protein uL16 family. In terms of assembly, part of the 50S ribosomal subunit.

Binds 23S rRNA and is also seen to make contacts with the A and possibly P site tRNAs. The protein is Large ribosomal subunit protein uL16 of Paraburkholderia phytofirmans (strain DSM 17436 / LMG 22146 / PsJN) (Burkholderia phytofirmans).